A 265-amino-acid polypeptide reads, in one-letter code: 3-deoxy-manno-octulosonate cytidylyltransferase 2 (265 aa).

The protein belongs to the KdsB family.

The protein resides in the cytoplasm. The enzyme catalyses 3-deoxy-alpha-D-manno-oct-2-ulosonate + CTP = CMP-3-deoxy-beta-D-manno-octulosonate + diphosphate. It participates in nucleotide-sugar biosynthesis; CMP-3-deoxy-D-manno-octulosonate biosynthesis; CMP-3-deoxy-D-manno-octulosonate from 3-deoxy-D-manno-octulosonate and CTP: step 1/1. Its pathway is bacterial outer membrane biogenesis; lipopolysaccharide biosynthesis. In terms of biological role, activates KDO (a required 8-carbon sugar) for incorporation into bacterial lipopolysaccharide in Gram-negative bacteria. This is 3-deoxy-manno-octulosonate cytidylyltransferase 2 from Burkholderia lata (strain ATCC 17760 / DSM 23089 / LMG 22485 / NCIMB 9086 / R18194 / 383).